The sequence spans 102 residues: Protein YcgL (102 aa).

The YcgL domain occupies 14-98 (MFCVIYRSSK…PPEDLLKQHL (85 aa)).

This chain is Protein YcgL, found in Salmonella agona (strain SL483).